The chain runs to 327 residues: MKFSSLLFTASLVAAMPASIEPRQAQESINKLIKAKGKLYYGTITDPNLLQSQQNNAVIKADFGQVTPENSMKWDATEPQQGKFNFGGGDQVVNFAAQNGLKVRGHALVWHSQLPQWVHNIKDKTQMKNAIENHIKNVAGHFKGKVYAWDVLNEIFDWDGSLRKDSPFTQVLGEEFVGIAFRAARAADPNAKLYINDYSIDDPNAAKLKAGMVAHVKKWVSQGIPIDGIGSQTHLDPGAANGVQAALQQMASTGVKEVAITELDIRSAPAADYATVTKACLNVPKCVGITVWGVSDKDSWRKEKDSLLFNAQYQAKPAYTAVVNALR.

The signal sequence occupies residues 1-15; it reads MKFSSLLFTASLVAA. The GH10 domain maps to 43–325; that stretch reads TITDPNLLQS…KPAYTAVVNA (283 aa). Glu-154 functions as the Proton donor in the catalytic mechanism. Glu-262 acts as the Nucleophile in catalysis. Cys-280 and Cys-286 form a disulfide bridge.

It belongs to the glycosyl hydrolase 10 (cellulase F) family.

Its subcellular location is the secreted. The enzyme catalyses Endohydrolysis of (1-&gt;4)-beta-D-xylosidic linkages in xylans.. It functions in the pathway glycan degradation; xylan degradation. Its activity is regulated as follows. Weakly inhibited by the wheat xylanase inhibiting protein I (XIP-I). Functionally, endo-1,4-beta-xylanase involved in the hydrolysis of xylan, a major structural heterogeneous polysaccharide found in plant biomass representing the second most abundant polysaccharide in the biosphere, after cellulose. Plays an important role in causing fusarium head blight (FHB) on cereal crops. This is Endo-1,4-beta-xylanase C (XYLC) from Gibberella zeae (strain ATCC MYA-4620 / CBS 123657 / FGSC 9075 / NRRL 31084 / PH-1) (Wheat head blight fungus).